Here is a 174-residue protein sequence, read N- to C-terminus: FMN-dependent NADPH-azoreductase (174 aa).

FMN is bound by residues 9-11, 15-16, 73-76, and Gly-106; these read TPR, RT, and EYHS.

This sequence belongs to the azoreductase type 2 family. Homotetramer. It depends on FMN as a cofactor.

Its function is as follows. Catalyzes the reductive cleavage of azo bond in aromatic azo compounds to the corresponding amines. Requires NADPH, but not NADH, as an electron donor for its activity. The sequence is that of FMN-dependent NADPH-azoreductase (azr) from Bacillus subtilis (strain 168).